The following is a 164-amino-acid chain: Putative F-box protein At1g59675 (164 aa).

An F-box domain is found at 9 to 56 (SQSDHVPLDLTIEILSRLPAKSVGRFRSVSKLWSANTTSQNFINSFAT).

The sequence is that of Putative F-box protein At1g59675 from Arabidopsis thaliana (Mouse-ear cress).